Here is a 323-residue protein sequence, read N- to C-terminus: Calcium homeostasis modulator protein 2 (323 aa).

The Cytoplasmic portion of the chain corresponds to 1-21 (MAALIAENFRFLSLFFKSKDV). Residues 14 to 39 (LFFKSKDVMIFNGLVALGTVGSQELF) are central pore. Residues 22-43 (MIFNGLVALGTVGSQELFSVVA) form a helical membrane-spanning segment. Residues 44 to 52 (FHCPCSPAR) are Extracellular-facing. 2 disulfides stabilise this stretch: C46–C130 and C48–C162. Residues 53-76 (NYLYGLTAIGVPALALFLIGVILN) traverse the membrane as a helical segment. Residues 77–101 (NHTWNLVAECQYRRAKNCSAAPTFL) are Cytoplasmic-facing. A helical transmembrane segment spans residues 102 to 132 (LLSSILGRAAVAPVTWSVISLLRGEAYVCAL). The Extracellular segment spans residues 133–179 (SEFVDPSSLTAGDEGFPPDHATEILARFPCGEGPANLSGFREEVSRR). A hemichannel docking region spans residues 145–152 (DEGFPPDH). The helical transmembrane segment at 180-206 (LKYESQLFGWLLIGVVAILVFLTKCFK) threads the bilayer. Topologically, residues 207–323 (HYCSPLSYRQ…DNVEMALLTV (117 aa)) are cytoplasmic. Positions 214–251 (YRQEAYWAQYRTNEDQLFQRTAEVHSRVLAANNVRRFF) are intersubunit interaction.

This sequence belongs to the CALHM family. In terms of assembly, homo-undecamer. Two undecameric hemichannels can assemble in a head-to-head manner to form a gap junction.

Its subcellular location is the cell membrane. It catalyses the reaction ATP(in) = ATP(out). Pore-forming subunit of Ca(2+) homeostasis modulator channels. Mediates ATP release from astrocytes and ATP-induced Ca(2+) influx in microglia thus regulating neuronal ATP and Ca(2+) homeostasis, synaptic transmission and neuroinflammatory response. May form intercellular gap junctions. The gating mechanism remains unknown. The sequence is that of Calcium homeostasis modulator protein 2 (Calhm2) from Rattus norvegicus (Rat).